We begin with the raw amino-acid sequence, 243 residues long: 1-(5-phosphoribosyl)-5-[(5-phosphoribosylamino)methylideneamino] imidazole-4-carboxamide isomerase (243 aa).

The active-site Proton acceptor is Asp8. Asp130 (proton donor) is an active-site residue.

This sequence belongs to the HisA/HisF family.

Its subcellular location is the cytoplasm. The enzyme catalyses 1-(5-phospho-beta-D-ribosyl)-5-[(5-phospho-beta-D-ribosylamino)methylideneamino]imidazole-4-carboxamide = 5-[(5-phospho-1-deoxy-D-ribulos-1-ylimino)methylamino]-1-(5-phospho-beta-D-ribosyl)imidazole-4-carboxamide. It functions in the pathway amino-acid biosynthesis; L-histidine biosynthesis; L-histidine from 5-phospho-alpha-D-ribose 1-diphosphate: step 4/9. The chain is 1-(5-phosphoribosyl)-5-[(5-phosphoribosylamino)methylideneamino] imidazole-4-carboxamide isomerase from Acinetobacter baumannii (strain SDF).